An 895-amino-acid polypeptide reads, in one-letter code: MASSSKASDSSSQRSKRSDQGTGREAAPASVVPIHGNLTQLIRQIKSRRLLYIKEKLEANRKTLQRHSCSLFDVAAAAEVASRGSDGGNALSQRAAEGQFRLAGSDLAHGIGERDVVYMQEENLASGTLVLSSSGAAAQRTVVRFVKLPLVERIPPYTTWIFLDKNQRMADDQSVVGRRRIYYDPVGNEALICSDSDEEIPEPEEEKHFFTEGEDQLIWRATQEHGLNREVVNVLCQFIDSTPSEIEERSEVLFEKNEKNSGSSDKIERQLSLDKTMDAVLDSFDNLFCRRCLVFDCRLHGCSQNLVFPTEKQPYSFEPDENKKPCGRQCYLRWRGGFQEIHDVGLSGCATYNMESGTVSHKVDVSIMSESEDSNREKGNIRSMTLVGTSGSKIISSVSAEESTTPPSADTSETENASSDMPPSSLRKYKISKRGPRYRERSPGKRQKVFTSDISFASNILNKLSIPEIRDTRLESREPGGDKLQILDESTKKTSSKDICGESPITTTENMGIESKKVSSTKNFLEHTLSCWSALERDLYLKGIEIFGKNSCLIARNLLSGMKTCMEVANYMYNNGAAMAKRPLLNKSISGDFAETEQDYMEQDMVARTRIYRRRGRNRKLKYTWKSAGHPTVRKRIGDGKQWYTQYNPCVCQQMCGKDCPCVENGTCCEKYCGCSKSCKNKFRGCHCAKSQCRSRQCPCFAASRECDPDVCRNCWVSCGDGSLGEPPARGDGYQCGNMKLLLKQQQRILLGRSDVAGWGAFIKNPVNKNDYLGEYTGELISHKEADKRGKIYDRANSSFLFDLNDQYVLDAYRKGDKLKFANHSSNPNCYAKVMLVAGDHRVGIYAKEHIEASEELFYDYRYGPDQAPAWARRPEGSKKDEASVSHHRAHKVAR.

Positions 1-13 (MASSSKASDSSSQ) are enriched in low complexity. 2 disordered regions span residues 1-30 (MASS…APAS) and 396-446 (SSVS…PGKR). Over residues 396 to 422 (SSVSAEESTTPPSADTSETENASSDMP) the composition is skewed to polar residues. Over residues 427–436 (RKYKISKRGP) the composition is skewed to basic residues. Residues 528–578 (TLSCWSALERDLYLKGIEIFGKNSCLIARNLLSGMKTCMEVANYMYNNGAA) form the SANT domain. One can recognise a CXC domain in the interval 628–732 (AGHPTVRKRI…SLGEPPARGD (105 aa)). Residues 747–862 (QRILLGRSDV…ASEELFYDYR (116 aa)) enclose the SET domain. The interval 870-895 (AWARRPEGSKKDEASVSHHRAHKVAR) is disordered. Positions 873-885 (RRPEGSKKDEASV) are enriched in basic and acidic residues. Basic residues predominate over residues 886-895 (SHHRAHKVAR).

Belongs to the class V-like SAM-binding methyltransferase superfamily. Histone-lysine methyltransferase family. EZ subfamily. Widely expressed.

It is found in the nucleus. The enzyme catalyses L-lysyl(27)-[histone H3] + 3 S-adenosyl-L-methionine = N(6),N(6),N(6)-trimethyl-L-lysyl(27)-[histone H3] + 3 S-adenosyl-L-homocysteine + 3 H(+). Its function is as follows. Polycomb group (PcG) protein. Catalytic subunit of some PcG multiprotein complex, which methylates 'Lys-27' of histone H3, leading to transcriptional repression of the affected target genes. PcG proteins are not required to initiate repression, but to maintain it during later stages of development. The chain is Histone-lysine N-methyltransferase EZ3 (EZ3) from Zea mays (Maize).